Here is a 92-residue protein sequence, read N- to C-terminus: Large ribosomal subunit protein uL23 (92 aa).

This sequence belongs to the universal ribosomal protein uL23 family. As to quaternary structure, part of the 50S ribosomal subunit. Contacts protein L29, and trigger factor when it is bound to the ribosome.

In terms of biological role, one of the early assembly proteins it binds 23S rRNA. One of the proteins that surrounds the polypeptide exit tunnel on the outside of the ribosome. Forms the main docking site for trigger factor binding to the ribosome. In Bdellovibrio bacteriovorus (strain ATCC 15356 / DSM 50701 / NCIMB 9529 / HD100), this protein is Large ribosomal subunit protein uL23.